A 666-amino-acid polypeptide reads, in one-letter code: Threonine--tRNA ligase (666 aa).

The TGS domain occupies 7–70 (QQVTLTVTLP…TADCTAEIIT (64 aa)). The tract at residues 253-555 (DHRKLGTELE…LIEHTAGNFP (303 aa)) is catalytic. Positions 351, 402, and 532 each coordinate Zn(2+).

Belongs to the class-II aminoacyl-tRNA synthetase family. In terms of assembly, homodimer. The cofactor is Zn(2+).

Its subcellular location is the cytoplasm. It catalyses the reaction tRNA(Thr) + L-threonine + ATP = L-threonyl-tRNA(Thr) + AMP + diphosphate + H(+). Its function is as follows. Catalyzes the attachment of threonine to tRNA(Thr) in a two-step reaction: L-threonine is first activated by ATP to form Thr-AMP and then transferred to the acceptor end of tRNA(Thr). Also edits incorrectly charged L-seryl-tRNA(Thr). The sequence is that of Threonine--tRNA ligase from Chlorobium phaeovibrioides (strain DSM 265 / 1930) (Prosthecochloris vibrioformis (strain DSM 265)).